Reading from the N-terminus, the 275-residue chain is Small ribosomal subunit protein uS3 (275 aa).

The KH type-2 domain occupies 39–107 (VRIYLKKKLK…PVHVNIEEIR (69 aa)). The segment at 216–275 (AAATSAEPAAEEKKTRRAPSKTAARKPAAGTDKPLVAAKPAVKRVRKVETPAADTQKSGE) is disordered.

This sequence belongs to the universal ribosomal protein uS3 family. In terms of assembly, part of the 30S ribosomal subunit. Forms a tight complex with proteins S10 and S14.

Binds the lower part of the 30S subunit head. Binds mRNA in the 70S ribosome, positioning it for translation. This is Small ribosomal subunit protein uS3 from Polynucleobacter asymbioticus (strain DSM 18221 / CIP 109841 / QLW-P1DMWA-1) (Polynucleobacter necessarius subsp. asymbioticus).